Reading from the N-terminus, the 555-residue chain is HERV-H_2q24.1 provirus ancestral Env polyprotein (555 aa).

The first 35 residues, 1–35, serve as a signal peptide directing secretion; that stretch reads MILAGRAPSNTSTLMKFYSLLLYSLLFSFPFLYHP. Residues 36–515 lie on the Extracellular side of the membrane; sequence LPLPSYLHHT…WALSNWMSWV (480 aa). Asn47 is a glycosylation site (N-linked (GlcNAc...) asparagine). Residues 64–67 carry the CXXC motif; the sequence is CWLC. Residues Asn222, Asn265, Asn283, Asn352, and Asn370 are each glycosylated (N-linked (GlcNAc...) asparagine). Residues 388–408 form a fusion peptide region; it reads VIPLIPLMVGLGLSASTIALS. N-linked (GlcNAc...) asparagine glycosylation is present at Asn475. Residues 516–536 traverse the membrane as a helical segment; that stretch reads LPILSPLIPIFLLLLFGPCIF. The Cytoplasmic portion of the chain corresponds to 537 to 555; the sequence is HLVSQFIQNRIQAITNHSI.

It belongs to the gamma type-C retroviral envelope protein family. HERV class-I H env subfamily. As to quaternary structure, the surface (SU) and transmembrane (TM) proteins form a heterodimer. SU and TM are attached by noncovalent interactions or by a labile interchain disulfide bond. In terms of processing, specific enzymatic cleavages in vivo yield the mature SU and TM proteins. As to expression, low expression in testis.

It is found in the virion. It localises to the cell membrane. Retroviral envelope proteins mediate receptor recognition and membrane fusion during early infection. Endogenous envelope proteins may have kept, lost or modified their original function during evolution. This endogenous envelope protein has lost its original fusogenic properties. In terms of biological role, SU mediates receptor recognition. Functionally, TM anchors the envelope heterodimer to the viral membrane through one transmembrane domain. The other hydrophobic domain, called fusion peptide, mediates fusion of the viral membrane with the target cell membrane. This Homo sapiens (Human) protein is HERV-H_2q24.1 provirus ancestral Env polyprotein.